A 230-amino-acid polypeptide reads, in one-letter code: Heptaprenylglyceryl phosphate synthase (230 aa).

Lys12 contacts sn-glycerol 1-phosphate. Residues Asp14 and Thr40 each coordinate Mg(2+). Sn-glycerol 1-phosphate is bound by residues 159–164, Gly189, and 209–210; these read YIEYSG and GD.

The protein belongs to the GGGP/HepGP synthase family. Group I subfamily. In terms of assembly, homodimer. Requires Mg(2+) as cofactor.

The enzyme catalyses sn-glycerol 1-phosphate + all-trans-heptaprenyl diphosphate = 3-heptaprenyl-sn-glycero-1-phosphate + diphosphate. Its pathway is membrane lipid metabolism; glycerophospholipid metabolism. In terms of biological role, prenyltransferase that catalyzes in vivo the transfer of the heptaprenyl moiety of heptaprenyl pyrophosphate (HepPP; 35 carbon atoms) to the C3 hydroxyl of sn-glycerol-1-phosphate (G1P), producing heptaprenylglyceryl phosphate (HepGP). This reaction is an ether-bond-formation step in the biosynthesis of archaea-type G1P-based membrane lipids found in Bacillales. This is Heptaprenylglyceryl phosphate synthase from Staphylococcus aureus (strain USA300).